We begin with the raw amino-acid sequence, 194 residues long: MKIACDIPVSEVMSFPVIKATKNMSIYDIANIMTENNIGAVVIVENNKPIGIVTERDIVKRVVSKNLKPKDVLAEEVMSKKIITIPQNASITEAAKIMATHGIKRLPVVKDGELVGIVTQSDIVRVSPELLEIVIEYASITPEEKEVISLDTDEFSEEYINGICENCGYQGRVRLYQGRYLCDECIEEFEEKEE.

CBS domains are found at residues 13–72 (MSFP…PKDV) and 78–133 (MSKK…LLEI). In terms of domain architecture, ACP-type MB spans 159–192 (YINGICENCGYQGRVRLYQGRYLCDECIEEFEEK). Fe cation contacts are provided by Cys-164, Cys-167, Cys-182, and Cys-185. Residues Cys-164, Cys-167, Cys-182, and Cys-185 each contribute to the Zn(2+) site.

This is an uncharacterized protein from Methanocaldococcus jannaschii (strain ATCC 43067 / DSM 2661 / JAL-1 / JCM 10045 / NBRC 100440) (Methanococcus jannaschii).